A 389-amino-acid chain; its full sequence is Choline/ethanolaminephosphotransferase 2 (389 aa).

8 consecutive transmembrane segments (helical) span residues 49-69 (MITL…YIYS), 141-161 (TFWF…EHYF), 176-196 (GLAL…EWWA), 220-240 (IILF…NTSN), 252-272 (MLLA…VLIW), 286-306 (HLVV…MILA), 321-338 (MSLL…TARL), and 350-370 (VLLG…TSVI).

It belongs to the CDP-alcohol phosphatidyltransferase class-I family. It depends on Mg(2+) as a cofactor. The cofactor is Mn(2+).

Its subcellular location is the membrane. It catalyses the reaction CDP-ethanolamine + a 1,2-diacyl-sn-glycerol = a 1,2-diacyl-sn-glycero-3-phosphoethanolamine + CMP + H(+). It carries out the reaction CDP-choline + a 1,2-diacyl-sn-glycerol = a 1,2-diacyl-sn-glycero-3-phosphocholine + CMP + H(+). It functions in the pathway phospholipid metabolism; phosphatidylethanolamine biosynthesis; phosphatidylethanolamine from ethanolamine: step 3/3. It participates in phospholipid metabolism; phosphatidylcholine biosynthesis; phosphatidylcholine from phosphocholine: step 2/2. In terms of biological role, catalyzes both phosphatidylcholine and phosphatidylethanolamine biosynthesis from CDP-choline and CDP-ethanolamine, respectively. Has a higher cholinephosphotransferase activity than ethanolaminephosphotransferase activity. This chain is Choline/ethanolaminephosphotransferase 2 (AAPT2), found in Arabidopsis thaliana (Mouse-ear cress).